Here is a 188-residue protein sequence, read N- to C-terminus: Elongation factor P (188 aa).

Position 34 is an N6-(3,6-diaminohexanoyl)-5-hydroxylysine (K34).

The protein belongs to the elongation factor P family. May be beta-lysylated on the epsilon-amino group of Lys-34 by the combined action of EpmA and EpmB, and then hydroxylated on the C5 position of the same residue by EpmC (if this protein is present). Lysylation is critical for the stimulatory effect of EF-P on peptide-bond formation. The lysylation moiety may extend toward the peptidyltransferase center and stabilize the terminal 3-CCA end of the tRNA. Hydroxylation of the C5 position on Lys-34 may allow additional potential stabilizing hydrogen-bond interactions with the P-tRNA.

The protein resides in the cytoplasm. Its pathway is protein biosynthesis; polypeptide chain elongation. Functionally, involved in peptide bond synthesis. Alleviates ribosome stalling that occurs when 3 or more consecutive Pro residues or the sequence PPG is present in a protein, possibly by augmenting the peptidyl transferase activity of the ribosome. Modification of Lys-34 is required for alleviation. The sequence is that of Elongation factor P from Klebsiella pneumoniae (strain 342).